Consider the following 355-residue polypeptide: GTPase Obg (355 aa).

Residues 1 to 159 (MKLVDEAEIL…RLLKLELKLL (159 aa)) form the Obg domain. The OBG-type G domain maps to 160–342 (ADVGLLGFPN…IMKDVMAFFD (183 aa)). Residues 166–173 (GFPNAGKS), 191–195 (FTTLY), 213–216 (DVPG), 292–295 (NKAD), and 323–325 (SAL) each bind GTP. 2 residues coordinate Mg(2+): S173 and T193.

Belongs to the TRAFAC class OBG-HflX-like GTPase superfamily. OBG GTPase family. Monomer. The cofactor is Mg(2+).

It is found in the cytoplasm. In terms of biological role, an essential GTPase which binds GTP, GDP and possibly (p)ppGpp with moderate affinity, with high nucleotide exchange rates and a fairly low GTP hydrolysis rate. Plays a role in control of the cell cycle, stress response, ribosome biogenesis and in those bacteria that undergo differentiation, in morphogenesis control. The chain is GTPase Obg from Xanthomonas axonopodis pv. citri (strain 306).